A 150-amino-acid chain; its full sequence is Lipoprotein signal peptidase (150 aa).

Transmembrane regions (helical) follow at residues 8–28, 58–78, and 81–101; these read FYAL…LAHA, GFSW…GWFL, and TTGS…NVFD. Catalysis depends on residues D116 and D132. The chain crosses the membrane as a helical span at residues 126 to 146; that stretch reads VVFNIADLFILAGVFGTFLFL.

Belongs to the peptidase A8 family.

The protein localises to the cell membrane. It carries out the reaction Release of signal peptides from bacterial membrane prolipoproteins. Hydrolyzes -Xaa-Yaa-Zaa-|-(S,diacylglyceryl)Cys-, in which Xaa is hydrophobic (preferably Leu), and Yaa (Ala or Ser) and Zaa (Gly or Ala) have small, neutral side chains.. Its pathway is protein modification; lipoprotein biosynthesis (signal peptide cleavage). In terms of biological role, this protein specifically catalyzes the removal of signal peptides from prolipoproteins. This Tropheryma whipplei (strain Twist) (Whipple's bacillus) protein is Lipoprotein signal peptidase.